A 320-amino-acid chain; its full sequence is Heterogeneous nuclear ribonucleoprotein A1 (320 aa).

Methionine 1 carries the post-translational modification N-acetylmethionine. Serine 2 carries the post-translational modification N-acetylserine; in Heterogeneous nuclear ribonucleoprotein A1, N-terminally processed. A Phosphoserine modification is found at serine 2. Lysine 3 is subject to N6-acetyllysine; alternate. A Glycyl lysine isopeptide (Lys-Gly) (interchain with G-Cter in SUMO2); alternate cross-link involves residue lysine 3. 2 positions are modified to phosphoserine: serine 4 and serine 6. The tract at residues 4 to 94 (SESPKEPEQL…EPKRAVSRED (91 aa)) is globular A domain. A Glycyl lysine isopeptide (Lys-Gly) (interchain with G-Cter in SUMO2) cross-link involves residue lysine 8. RRM domains are found at residues 14–97 (RKLF…DSQR) and 105–184 (KKIF…LCKQ). At serine 22 the chain carries Phosphoserine. A Glycyl lysine isopeptide (Lys-Gly) (interchain with G-Cter in SUMO2) cross-link involves residue lysine 78. Residues 95-185 (SQRPGAHLTV…EVRKALCKQE (91 aa)) form a globular B domain region. Residue lysine 113 forms a Glycyl lysine isopeptide (Lys-Gly) (interchain with G-Cter in SUMO) linkage. Glycyl lysine isopeptide (Lys-Gly) (interchain with G-Cter in SUMO2) cross-links involve residues lysine 179 and lysine 183. Positions 188–216 (SASSSQRGRSGSGNFGGGRGGGFGGNDNF) are disordered. Position 192 is a phosphoserine; by MKNK2 (serine 192). An Asymmetric dimethylarginine; alternate modification is found at arginine 194. Arginine 194 carries the dimethylated arginine; alternate modification. At arginine 194 the chain carries Omega-N-methylarginine; alternate. Positions 197–216 (SGSGNFGGGRGGGFGGNDNF) are enriched in gly residues. A Phosphoserine modification is found at serine 199. Residues arginine 206, arginine 218, arginine 225, and arginine 232 each carry the asymmetric dimethylarginine; alternate modification. Dimethylated arginine; alternate is present on arginine 206. Omega-N-methylarginine; alternate occurs at positions 206, 218, 225, and 232. The tract at residues 218 to 240 (RGGNFSGRGGFGGSRGGGGYGGS) is RNA-binding RGG-box. Residue arginine 225 is modified to Dimethylated arginine; alternate. Positions 268-305 (NQSSNFGPMKGGNFGGRSSGPYGGGGQYFAKPRNQGGY) are nuclear targeting sequence. Positions 271–320 (SNFGPMKGGNFGGRSSGPYGGGGQYFAKPRNQGGYGGSSSSSSYGSGRRF) are disordered. Over residues 276–294 (MKGGNFGGRSSGPYGGGGQ) the composition is skewed to gly residues. Position 284 is an omega-N-methylarginine (arginine 284). Residue serine 285 is modified to Phosphoserine. An N6-acetyllysine; alternate modification is found at lysine 298. Lysine 298 participates in a covalent cross-link: Glycyl lysine isopeptide (Lys-Gly) (interchain with G-Cter in SUMO2); alternate. Residue arginine 300 is modified to Omega-N-methylarginine. A compositionally biased stretch (low complexity) spans 308 to 320 (SSSSSSYGSGRRF). Serine 309 bears the Phosphoserine mark. Phosphoserine; by MKNK2 is present on residues serine 310, serine 311, and serine 312. A phosphoserine mark is found at serine 313 and serine 316. Omega-N-methylarginine is present on arginine 318.

As to quaternary structure, identified in the spliceosome C complex. Identified in a IGF2BP1-dependent mRNP granule complex containing untranslated mRNAs. Interacts with SEPT6. Interacts with C9orf72. Interacts with KHDRBS1. Interacts with UBQLN2. Interacts with PPIA/CYPA. In terms of processing, sumoylated.

It localises to the nucleus. The protein localises to the cytoplasm. Functionally, involved in the packaging of pre-mRNA into hnRNP particles, transport of poly(A) mRNA from the nucleus to the cytoplasm and modulation of splice site selection. Plays a role in the splicing of pyruvate kinase PKM by binding repressively to sequences flanking PKM exon 9, inhibiting exon 9 inclusion and resulting in exon 10 inclusion and production of the PKM M2 isoform. Binds to the IRES and thereby inhibits the translation of the apoptosis protease activating factor APAF1. May bind to specific miRNA hairpins. The polypeptide is Heterogeneous nuclear ribonucleoprotein A1 (Hnrnpa1) (Rattus norvegicus (Rat)).